The following is a 386-amino-acid chain: ATP phosphoribosyltransferase regulatory subunit (386 aa).

The protein belongs to the class-II aminoacyl-tRNA synthetase family. HisZ subfamily. Heteromultimer composed of HisG and HisZ subunits.

It is found in the cytoplasm. It participates in amino-acid biosynthesis; L-histidine biosynthesis; L-histidine from 5-phospho-alpha-D-ribose 1-diphosphate: step 1/9. Functionally, required for the first step of histidine biosynthesis. May allow the feedback regulation of ATP phosphoribosyltransferase activity by histidine. The chain is ATP phosphoribosyltransferase regulatory subunit from Ralstonia nicotianae (strain ATCC BAA-1114 / GMI1000) (Ralstonia solanacearum).